Here is a 336-residue protein sequence, read N- to C-terminus: 4-hydroxythreonine-4-phosphate dehydrogenase (336 aa).

Substrate-binding residues include His142 and Thr143. The a divalent metal cation site is built by His172, His217, and His274. The substrate site is built by Lys282, Asn291, and Arg300.

Belongs to the PdxA family. As to quaternary structure, homodimer. Zn(2+) serves as cofactor. It depends on Mg(2+) as a cofactor. Requires Co(2+) as cofactor.

Its subcellular location is the cytoplasm. The catalysed reaction is 4-(phosphooxy)-L-threonine + NAD(+) = 3-amino-2-oxopropyl phosphate + CO2 + NADH. The protein operates within cofactor biosynthesis; pyridoxine 5'-phosphate biosynthesis; pyridoxine 5'-phosphate from D-erythrose 4-phosphate: step 4/5. In terms of biological role, catalyzes the NAD(P)-dependent oxidation of 4-(phosphooxy)-L-threonine (HTP) into 2-amino-3-oxo-4-(phosphooxy)butyric acid which spontaneously decarboxylates to form 3-amino-2-oxopropyl phosphate (AHAP). This Trichlorobacter lovleyi (strain ATCC BAA-1151 / DSM 17278 / SZ) (Geobacter lovleyi) protein is 4-hydroxythreonine-4-phosphate dehydrogenase.